We begin with the raw amino-acid sequence, 261 residues long: Pantothenate synthetase (261 aa).

M29 to H36 lines the ATP pocket. Residue H36 is the Proton donor of the active site. Q60 contacts (R)-pantoate. Q60 lines the beta-alanine pocket. An ATP-binding site is contributed by G147–D150. Q153 is a binding site for (R)-pantoate. L184–R187 lines the ATP pocket.

It belongs to the pantothenate synthetase family. In terms of assembly, homodimer.

The protein resides in the cytoplasm. The catalysed reaction is (R)-pantoate + beta-alanine + ATP = (R)-pantothenate + AMP + diphosphate + H(+). Its pathway is cofactor biosynthesis; (R)-pantothenate biosynthesis; (R)-pantothenate from (R)-pantoate and beta-alanine: step 1/1. Its function is as follows. Catalyzes the condensation of pantoate with beta-alanine in an ATP-dependent reaction via a pantoyl-adenylate intermediate. This chain is Pantothenate synthetase, found in Francisella tularensis subsp. novicida (strain U112).